The following is a 161-amino-acid chain: Cyclic pyranopterin monophosphate synthase (161 aa).

Substrate contacts are provided by residues 78-80 and 116-117; these read LCH and ME. Residue Asp131 is part of the active site.

Belongs to the MoaC family. Homohexamer; trimer of dimers.

The enzyme catalyses (8S)-3',8-cyclo-7,8-dihydroguanosine 5'-triphosphate = cyclic pyranopterin phosphate + diphosphate. Its pathway is cofactor biosynthesis; molybdopterin biosynthesis. Functionally, catalyzes the conversion of (8S)-3',8-cyclo-7,8-dihydroguanosine 5'-triphosphate to cyclic pyranopterin monophosphate (cPMP). In Bordetella parapertussis (strain 12822 / ATCC BAA-587 / NCTC 13253), this protein is Cyclic pyranopterin monophosphate synthase.